We begin with the raw amino-acid sequence, 236 residues long: tRNA (guanine-N(1)-)-methyltransferase (236 aa).

S-adenosyl-L-methionine is bound by residues glycine 110 and 129–134 (LGDFVL).

This sequence belongs to the RNA methyltransferase TrmD family. Homodimer.

The protein localises to the cytoplasm. It catalyses the reaction guanosine(37) in tRNA + S-adenosyl-L-methionine = N(1)-methylguanosine(37) in tRNA + S-adenosyl-L-homocysteine + H(+). In terms of biological role, specifically methylates guanosine-37 in various tRNAs. In Clostridium perfringens (strain ATCC 13124 / DSM 756 / JCM 1290 / NCIMB 6125 / NCTC 8237 / Type A), this protein is tRNA (guanine-N(1)-)-methyltransferase.